The sequence spans 317 residues: MSTTFLSVMAGLSGIVVFGALISVFHIYTDINSFVDEAHRELGAFRGVANDAWNSMVNHDDSARVARSVFVRRQKKQSQCNCGPQASNCPAGPPGPPGASGDRGLDGQPGPAGKPGQPGVAGPAHHQQQECIKCPQGAPGPAGAPGNPGPQGPNGNPGAPAHGGGQGPPGPPGPAGDAGSPGQAGAPGNPGRPGQSGQRSRGLPGPSGRPGPQGPPGAPGQPGSGSTPGPAGPPGPPGPNGQPGHPGQDGQPGAPGNDGAPGSDAAYCPCPARSAAVFRHRNVAVNRHRAVAKKRVVAKKRVVARKRVVAARRHVQA.

The tract at residues 80–262 is disordered; the sequence is CNCGPQASNC…GAPGNDGAPG (183 aa). 3 triple-helical region regions span residues 92–124, 137–199, and 202–264; these read GPPG…AGPA, GAPG…SGQR, and GLPG…PGSD. Low complexity-rich tracts occupy residues 108–124, 135–145, and 175–206; these read QPGP…AGPA, PQGAPGPAGAP, and AGDA…LPGP. Composition is skewed to pro residues over residues 207 to 219 and 230 to 240; these read SGRP…PGAP and PAGPPGPPGPN. A compositionally biased stretch (low complexity) spans 242–262; sequence QPGHPGQDGQPGAPGNDGAPG.

It belongs to the cuticular collagen family. As to quaternary structure, collagen polypeptide chains are complexed within the cuticle by disulfide bonds and other types of covalent cross-links.

In terms of biological role, nematode cuticles are composed largely of collagen-like proteins. The cuticle functions both as an exoskeleton and as a barrier to protect the worm from its environment. This Caenorhabditis elegans protein is Putative cuticle collagen 80 (col-80).